The primary structure comprises 319 residues: Acetyl-coenzyme A carboxylase carboxyl transferase subunit alpha (319 aa).

The 255-residue stretch at 39 to 293 folds into the CoA carboxyltransferase C-terminal domain; that stretch reads KLEKKVDRMR…HEAIARQLKE (255 aa).

This sequence belongs to the AccA family. As to quaternary structure, acetyl-CoA carboxylase is a heterohexamer composed of biotin carboxyl carrier protein (AccB), biotin carboxylase (AccC) and two subunits each of ACCase subunit alpha (AccA) and ACCase subunit beta (AccD).

The protein localises to the cytoplasm. It carries out the reaction N(6)-carboxybiotinyl-L-lysyl-[protein] + acetyl-CoA = N(6)-biotinyl-L-lysyl-[protein] + malonyl-CoA. It participates in lipid metabolism; malonyl-CoA biosynthesis; malonyl-CoA from acetyl-CoA: step 1/1. In terms of biological role, component of the acetyl coenzyme A carboxylase (ACC) complex. First, biotin carboxylase catalyzes the carboxylation of biotin on its carrier protein (BCCP) and then the CO(2) group is transferred by the carboxyltransferase to acetyl-CoA to form malonyl-CoA. In Geobacter sulfurreducens (strain ATCC 51573 / DSM 12127 / PCA), this protein is Acetyl-coenzyme A carboxylase carboxyl transferase subunit alpha.